Here is a 79-residue protein sequence, read N- to C-terminus: uncharacterized protein (79 aa).

This sequence belongs to the BolA/IbaG family.

This is an uncharacterized protein from Buchnera aphidicola subsp. Baizongia pistaciae (strain Bp).